A 609-amino-acid chain; its full sequence is Aspartate--tRNA(Asp/Asn) ligase (609 aa).

Glutamate 177 is an L-aspartate binding site. An aspartate region spans residues 201–204 (QLFK). Arginine 223 is an L-aspartate binding site. ATP is bound by residues 223–225 (RDE) and glutamine 232. Histidine 461 serves as a coordination point for L-aspartate. Position 499 (glutamate 499) interacts with ATP. Arginine 506 contributes to the L-aspartate binding site. 551–554 (GVDR) serves as a coordination point for ATP.

It belongs to the class-II aminoacyl-tRNA synthetase family. Type 1 subfamily. Homodimer.

It localises to the cytoplasm. The enzyme catalyses tRNA(Asx) + L-aspartate + ATP = L-aspartyl-tRNA(Asx) + AMP + diphosphate. Functionally, aspartyl-tRNA synthetase with relaxed tRNA specificity since it is able to aspartylate not only its cognate tRNA(Asp) but also tRNA(Asn). Reaction proceeds in two steps: L-aspartate is first activated by ATP to form Asp-AMP and then transferred to the acceptor end of tRNA(Asp/Asn). This is Aspartate--tRNA(Asp/Asn) ligase from Synechococcus sp. (strain CC9605).